A 343-amino-acid polypeptide reads, in one-letter code: 3-hydroxy-3-methylglutaryl-CoA lyase, cytoplasmic (343 aa).

Residue G2 is the site of N-myristoyl glycine attachment. The 268-residue stretch at 48-315 folds into the Pyruvate carboxyltransferase domain; the sequence is VKIVEVGPRD…NTGVDLYKVM (268 aa). R56 is a binding site for substrate. A divalent metal cation-binding residues include D57, H248, and H250. Residue C281 is part of the active site. N290 contacts a divalent metal cation.

This sequence belongs to the HMG-CoA lyase family. The cofactor is a divalent metal cation.

It localises to the cytoplasm. The protein localises to the cytosol. It is found in the endoplasmic reticulum membrane. It catalyses the reaction (3S)-3-hydroxy-3-methylglutaryl-CoA = acetoacetate + acetyl-CoA. It functions in the pathway metabolic intermediate metabolism; (S)-3-hydroxy-3-methylglutaryl-CoA degradation; acetoacetate from (S)-3-hydroxy-3-methylglutaryl-CoA: step 1/1. Its function is as follows. Non-mitochondrial 3-hydroxy-3-methylglutaryl-CoA lyase that catalyzes a cation-dependent cleavage of (S)-3-hydroxy-3-methylglutaryl-CoA into acetyl-CoA and acetoacetate, a key step in ketogenesis, the products of which support energy production in nonhepatic animal tissues. In Mus musculus (Mouse), this protein is 3-hydroxy-3-methylglutaryl-CoA lyase, cytoplasmic (Hmgcll1).